Here is a 355-residue protein sequence, read N- to C-terminus: Protein-glutamate methylesterase/protein-glutamine glutaminase (355 aa).

Residues 3–121 (NVLVVEDSPV…HPDHEATARK (119 aa)) enclose the Response regulatory domain. Asp-54 carries the 4-aspartylphosphate modification. Positions 154–348 (PLLNRVAPAR…AALTNLVAER (195 aa)) constitute a CheB-type methylesterase domain. Catalysis depends on residues Ser-170, His-197, and Asp-290.

This sequence belongs to the CheB family. Phosphorylated by CheA. Phosphorylation of the N-terminal regulatory domain activates the methylesterase activity.

It is found in the cytoplasm. It carries out the reaction [protein]-L-glutamate 5-O-methyl ester + H2O = L-glutamyl-[protein] + methanol + H(+). It catalyses the reaction L-glutaminyl-[protein] + H2O = L-glutamyl-[protein] + NH4(+). Involved in chemotaxis. Part of a chemotaxis signal transduction system that modulates chemotaxis in response to various stimuli. Catalyzes the demethylation of specific methylglutamate residues introduced into the chemoreceptors (methyl-accepting chemotaxis proteins or MCP) by CheR. Also mediates the irreversible deamidation of specific glutamine residues to glutamic acid. The chain is Protein-glutamate methylesterase/protein-glutamine glutaminase from Nitrosospira multiformis (strain ATCC 25196 / NCIMB 11849 / C 71).